The primary structure comprises 341 residues: L-threonine 3-dehydrogenase (341 aa).

Residue Cys38 participates in Zn(2+) binding. Active-site charge relay system residues include Thr40 and His43. Zn(2+) contacts are provided by His63, Glu64, Cys93, Cys96, Cys99, and Cys107. NAD(+) is bound by residues Ile175, Asp195, Arg200, 262–264 (LGI), and 286–287 (IY).

The protein belongs to the zinc-containing alcohol dehydrogenase family. In terms of assembly, homotetramer. It depends on Zn(2+) as a cofactor.

It is found in the cytoplasm. The catalysed reaction is L-threonine + NAD(+) = (2S)-2-amino-3-oxobutanoate + NADH + H(+). It functions in the pathway amino-acid degradation; L-threonine degradation via oxydo-reductase pathway; glycine from L-threonine: step 1/2. Catalyzes the NAD(+)-dependent oxidation of L-threonine to 2-amino-3-ketobutyrate. This is L-threonine 3-dehydrogenase from Yersinia pestis bv. Antiqua (strain Antiqua).